The sequence spans 433 residues: Oxaloacetate decarboxylase beta chain 2 (433 aa).

A run of 9 helical transmembrane segments spans residues 13–35 (LMHL…WLAI), 42–64 (LLLL…LALT), 125–147 (LFYK…VGAM), 160–182 (LLLG…TLNY), 214–236 (LAPE…VPLI), 266–288 (ILFP…PLLG), 308–327 (TVQN…SVGA), 339–361 (TLGI…VLMA), and 413–432 (VAGV…YVLA).

It belongs to the GcdB/MmdB/OadB family. In terms of assembly, heterotrimer of an alpha, a beta and a gamma subunit. The cofactor is Na(+).

It is found in the cell membrane. It carries out the reaction oxaloacetate + 2 Na(+)(in) + H(+) = pyruvate + 2 Na(+)(out) + CO2. Functionally, catalyzes the decarboxylation of oxaloacetate coupled to Na(+) translocation. The protein is Oxaloacetate decarboxylase beta chain 2 (oadB2) of Salmonella typhimurium (strain LT2 / SGSC1412 / ATCC 700720).